Reading from the N-terminus, the 352-residue chain is tRNA (guanine-N(1)-)-methyltransferase (352 aa).

S-adenosyl-L-methionine contacts are provided by residues G109 and 129 to 134 (IGDYVL).

Belongs to the RNA methyltransferase TrmD family. As to quaternary structure, homodimer.

The protein localises to the cytoplasm. It catalyses the reaction guanosine(37) in tRNA + S-adenosyl-L-methionine = N(1)-methylguanosine(37) in tRNA + S-adenosyl-L-homocysteine + H(+). Its function is as follows. Specifically methylates guanosine-37 in various tRNAs. This chain is tRNA (guanine-N(1)-)-methyltransferase, found in Chlamydia trachomatis serovar L2 (strain ATCC VR-902B / DSM 19102 / 434/Bu).